We begin with the raw amino-acid sequence, 604 residues long: Hemagglutinin glycoprotein (604 aa).

Topologically, residues 1-37 are intravirion; that stretch reads MLPYQDKVGAFYKDNARANSTKLSLVTEGHGGRRPPY. A helical transmembrane segment spans residues 38-58; it reads LLFVLLILLVGILALLAITGV. Residues 59–604 lie on the Virion surface side of the membrane; the sequence is RFHQVSTSNM…LVRIRFSCNR (546 aa). 3 N-linked (GlcNAc...) asparagine; by host glycosylation sites follow: N149, N422, and N587.

This sequence belongs to the paramyxoviruses hemagglutinin-neuraminidase family. Non-sialidase subfamily. As to quaternary structure, binds canine SLAMF1 at the cell surface.

It is found in the virion membrane. The protein resides in the host cell membrane. Attaches the virus to cell receptors and thereby initiating infection. Binding of H protein to the receptor induces a conformational change that allows the F protein to trigger virion/cell membranes fusion. The cellular receptor might be SLAM, and may explain the lymphotropism of the virus. This is Hemagglutinin glycoprotein (H) from Ailuropoda melanoleuca (Giant panda).